The primary structure comprises 1301 residues: DNA-directed RNA polymerase subunit beta (1301 aa).

Belongs to the RNA polymerase beta chain family. As to quaternary structure, in plastids the minimal PEP RNA polymerase catalytic core is composed of four subunits: alpha, beta, beta', and beta''. When a (nuclear-encoded) sigma factor is associated with the core the holoenzyme is formed, which can initiate transcription.

It is found in the plastid. Its subcellular location is the chloroplast. It carries out the reaction RNA(n) + a ribonucleoside 5'-triphosphate = RNA(n+1) + diphosphate. Its function is as follows. DNA-dependent RNA polymerase catalyzes the transcription of DNA into RNA using the four ribonucleoside triphosphates as substrates. The chain is DNA-directed RNA polymerase subunit beta from Chlorella vulgaris (Green alga).